A 69-amino-acid chain; its full sequence is U5-agatoxin-Ao1a (69 aa).

A signal peptide spans 1–20 (MRTIISLLLLSAMVFAVIEA). A propeptide spanning residues 21 to 34 (ISLEEGLQLFEGER) is cleaved from the precursor. Cystine bridges form between Cys-36–Cys-52 and Cys-43–Cys-57.

Belongs to the neurotoxin 01 (U2-agtx) family. Does not contain a cysteine at position 61 which disrupts the cysteine framework. Expressed by the venom gland.

Its subcellular location is the secreted. This is U5-agatoxin-Ao1a from Agelena orientalis (Funnel-web spider).